Reading from the N-terminus, the 268-residue chain is 4-hydroxy-tetrahydrodipicolinate reductase (268 aa).

Residues 7–12 (GAGGRM) and Glu-33 contribute to the NAD(+) site. Arg-34 contacts NADP(+). Residues 97 to 99 (GTT) and 121 to 124 (SGNM) each bind NAD(+). The active-site Proton donor/acceptor is His-155. (S)-2,3,4,5-tetrahydrodipicolinate is bound at residue His-156. The active-site Proton donor is Lys-159. 165 to 166 (GT) is a binding site for (S)-2,3,4,5-tetrahydrodipicolinate.

Belongs to the DapB family.

The protein localises to the cytoplasm. It carries out the reaction (S)-2,3,4,5-tetrahydrodipicolinate + NAD(+) + H2O = (2S,4S)-4-hydroxy-2,3,4,5-tetrahydrodipicolinate + NADH + H(+). The enzyme catalyses (S)-2,3,4,5-tetrahydrodipicolinate + NADP(+) + H2O = (2S,4S)-4-hydroxy-2,3,4,5-tetrahydrodipicolinate + NADPH + H(+). It functions in the pathway amino-acid biosynthesis; L-lysine biosynthesis via DAP pathway; (S)-tetrahydrodipicolinate from L-aspartate: step 4/4. Functionally, catalyzes the conversion of 4-hydroxy-tetrahydrodipicolinate (HTPA) to tetrahydrodipicolinate. The protein is 4-hydroxy-tetrahydrodipicolinate reductase of Brucella melitensis biotype 1 (strain ATCC 23456 / CCUG 17765 / NCTC 10094 / 16M).